Consider the following 520-residue polypeptide: D-aminopeptidase (520 aa).

The active-site Nucleophile is serine 62. Lysine 65 acts as the Proton donor/acceptor in catalysis. The important for specificity stretch occupies residues glutamine 477–glutamate 487. Position 481 (aspartate 481) interacts with substrate.

Belongs to the peptidase S12 family. As to quaternary structure, homodimer.

It catalyses the reaction Release of an N-terminal D-amino acid from a peptide, Xaa-|-Yaa-, in which Xaa is preferably D-Ala, D-Ser or D-Thr. D-amino acid amides and methyl esters also are hydrolyzed, as is glycine amide.. Its activity is regulated as follows. Inhibited by beta-lactam compounds such as 6-aminopenicillic acid, 7-aminocephalosporanic acid, benzylpenicillin and ampicillin. Inhibited by p-chloromercuribenzoate. Its function is as follows. Hydrolyzes N-terminal residues in D-amino acid-containing peptides. The sequence is that of D-aminopeptidase (dap) from Brucella anthropi (Ochrobactrum anthropi).